We begin with the raw amino-acid sequence, 157 residues long: Phosphopantetheine adenylyltransferase (157 aa).

Belongs to the eukaryotic CoaD family. In terms of assembly, monomer.

The protein resides in the cytoplasm. It carries out the reaction (R)-4'-phosphopantetheine + ATP + H(+) = 3'-dephospho-CoA + diphosphate. Its pathway is cofactor biosynthesis; coenzyme A biosynthesis. Reversibly transfers an adenylyl group from ATP to 4'-phosphopantetheine, yielding dephospho-CoA (dPCoA) and pyrophosphate. The protein is Phosphopantetheine adenylyltransferase of Pyrococcus abyssi (strain GE5 / Orsay).